The following is a 134-amino-acid chain: Profilin-2 (134 aa).

A disulfide bridge links C13 with C118. The Involved in PIP2 interaction signature appears at A84 to T100. Position 114 is a phosphothreonine (T114).

Belongs to the profilin family. Occurs in many kinds of cells as a complex with monomeric actin in a 1:1 ratio. In terms of processing, phosphorylated by MAP kinases.

The protein localises to the cytoplasm. Its subcellular location is the cytoskeleton. Functionally, binds to actin and affects the structure of the cytoskeleton. At high concentrations, profilin prevents the polymerization of actin, whereas it enhances it at low concentrations. In Olea europaea (Common olive), this protein is Profilin-2.